Reading from the N-terminus, the 116-residue chain is Dynein light chain Tctex-type 3 (116 aa).

A 3'-nitrotyrosine modification is found at tyrosine 4.

Belongs to the dynein light chain Tctex-type family. In terms of assembly, homodimer. The cytoplasmic dynein 1 complex consists of two catalytic heavy chains (HCs) and a number of non-catalytic subunits presented by intermediate chains (ICs), light intermediate chains (LICs) and light chains (LCs); the composition seems to vary in respect to the IC, LIC and LC composition. The heavy chain homodimer serves as a scaffold for the probable homodimeric assembly of the respective non-catalytic subunits. The ICs and LICs bind directly to the HC dimer and the LCs assemble on the IC dimer. DYNLT1 and DYNLT3 compete for association with dynein IC (DYNC1I1 or DYNC1I2). Self-associates. Interacts with DYNC1I1 and DYNC1I2. Interacts with BUB3. Interacts with SATB1 in nucleus to form complex with matrix attachment regions (MARs) of DNA.

The protein localises to the nucleus. Its subcellular location is the cytoplasm. It localises to the cytoskeleton. The protein resides in the chromosome. It is found in the centromere. The protein localises to the kinetochore. In terms of biological role, acts as one of several non-catalytic accessory components of the cytoplasmic dynein 1 complex that are thought to be involved in linking dynein to cargos and to adapter proteins that regulate dynein function. Cytoplasmic dynein 1 acts as a motor for the intracellular retrograde motility of vesicles and organelles along microtubules. Probably binds BUB3 as part of transport cargo. Required for the efficient progression through mitosis. The polypeptide is Dynein light chain Tctex-type 3 (Dynlt3) (Mus musculus (Mouse)).